Consider the following 110-residue polypeptide: NADH dehydrogenase [ubiquinone] iron-sulfur protein 6, mitochondrial (110 aa).

The N-terminal 22 residues, 1–22, are a transit peptide targeting the mitochondrion; the sequence is MASNLLKALIRSQILPSSRRNF.

Belongs to the complex I NDUFS6 subunit family. In terms of assembly, complex I is composed of at least 49 different subunits. This is a component of the iron-sulfur (IP) fragment of the enzyme.

It is found in the mitochondrion inner membrane. In terms of biological role, accessory subunit of the mitochondrial membrane respiratory chain NADH dehydrogenase (Complex I), that is believed not to be involved in catalysis. Complex I functions in the transfer of electrons from NADH to the respiratory chain. The immediate electron acceptor for the enzyme is believed to be ubiquinone. The sequence is that of NADH dehydrogenase [ubiquinone] iron-sulfur protein 6, mitochondrial from Arabidopsis thaliana (Mouse-ear cress).